We begin with the raw amino-acid sequence, 102 residues long: MPTKARIRLWSTNVENLNYVITQIRGIVEKTGIEMRGPIPLPTSKLEVPIMRLPHGEGRKKWEKWEMRVHKRLIDIAADERVMRQLMRVRVPEDVYIEIQLI.

This sequence belongs to the universal ribosomal protein uS10 family. As to quaternary structure, part of the 30S ribosomal subunit.

Involved in the binding of tRNA to the ribosomes. The protein is Small ribosomal subunit protein uS10 of Saccharolobus islandicus (strain M.16.4 / Kamchatka #3) (Sulfolobus islandicus).